Consider the following 835-residue polypeptide: Microcephalin (835 aa).

The region spanning 1–93 (MAAPILKDVV…AHIDESLFPA (93 aa)) is the BRCT 1 domain. Residues 184–206 (KEKRENLSPTSSQLIQQSHDNPS) form a disordered region. Polar residues predominate over residues 190-206 (LSPTSSQLIQQSHDNPS). Residues serine 279, serine 287, serine 296, and serine 333 each carry the phosphoserine modification. Threonine 335 carries the post-translational modification Phosphothreonine. Residues 346–361 (HSRPRSSSVKRKRVSH) are compositionally biased toward basic residues. Disordered stretches follow at residues 346 to 376 (HSRP…RKRS) and 418 to 442 (PDNL…PAQF). Serine 548 bears the Phosphoserine mark. A disordered region spans residues 557–582 (GLKSTQNRGTTSKISNSSEGEAQSEH). Over residues 559–577 (KSTQNRGTTSKISNSSEGE) the composition is skewed to polar residues. 2 consecutive BRCT domains span residues 640 to 730 (SGRG…PFEL) and 751 to 833 (YRGT…NYLL).

In terms of assembly, interacts with CDC27 and maybe other components of the APC/C complex. Interacts with histone variant H2AX under DNA damage conditions.

The protein localises to the cytoplasm. It localises to the cytoskeleton. Its subcellular location is the microtubule organizing center. The protein resides in the centrosome. Its function is as follows. Implicated in chromosome condensation and DNA damage induced cellular responses. May play a role in neurogenesis and regulation of the size of the cerebral cortex. The sequence is that of Microcephalin from Gorilla gorilla gorilla (Western lowland gorilla).